Consider the following 1316-residue polypeptide: DNA-directed RNA polymerase subunit beta' (1316 aa).

4 residues coordinate Zn(2+): Cys60, Cys62, Cys75, and Cys78. The Mg(2+) site is built by Asp535, Asp537, and Asp539. Zn(2+) is bound by residues Cys891, Cys968, Cys975, and Cys978.

This sequence belongs to the RNA polymerase beta' chain family. In terms of assembly, the RNAP catalytic core consists of 2 alpha, 1 beta, 1 beta' and 1 omega subunit. When a sigma factor is associated with the core the holoenzyme is formed, which can initiate transcription. Mg(2+) is required as a cofactor. Requires Zn(2+) as cofactor.

The enzyme catalyses RNA(n) + a ribonucleoside 5'-triphosphate = RNA(n+1) + diphosphate. Its function is as follows. DNA-dependent RNA polymerase catalyzes the transcription of DNA into RNA using the four ribonucleoside triphosphates as substrates. The sequence is that of DNA-directed RNA polymerase subunit beta' from Mycobacterium ulcerans (strain Agy99).